A 258-amino-acid chain; its full sequence is Thiazole synthase 1 (258 aa).

The active-site Schiff-base intermediate with DXP is the lysine 97. 1-deoxy-D-xylulose 5-phosphate-binding positions include glycine 158, 184–185 (AG), and 206–207 (NT).

This sequence belongs to the ThiG family. In terms of assembly, homotetramer. Forms heterodimers with either ThiH or ThiS.

The protein localises to the cytoplasm. It catalyses the reaction [ThiS sulfur-carrier protein]-C-terminal-Gly-aminoethanethioate + 2-iminoacetate + 1-deoxy-D-xylulose 5-phosphate = [ThiS sulfur-carrier protein]-C-terminal Gly-Gly + 2-[(2R,5Z)-2-carboxy-4-methylthiazol-5(2H)-ylidene]ethyl phosphate + 2 H2O + H(+). Its pathway is cofactor biosynthesis; thiamine diphosphate biosynthesis. Functionally, catalyzes the rearrangement of 1-deoxy-D-xylulose 5-phosphate (DXP) to produce the thiazole phosphate moiety of thiamine. Sulfur is provided by the thiocarboxylate moiety of the carrier protein ThiS. In vitro, sulfur can be provided by H(2)S. The chain is Thiazole synthase 1 from Syntrophotalea carbinolica (strain DSM 2380 / NBRC 103641 / GraBd1) (Pelobacter carbinolicus).